The following is a 354-amino-acid chain: Uroporphyrinogen decarboxylase (354 aa).

Substrate contacts are provided by residues 27–31, Asp77, Tyr154, Thr209, and His327; that span reads RQAGR.

Belongs to the uroporphyrinogen decarboxylase family. In terms of assembly, homodimer.

It localises to the cytoplasm. It catalyses the reaction uroporphyrinogen III + 4 H(+) = coproporphyrinogen III + 4 CO2. It functions in the pathway porphyrin-containing compound metabolism; protoporphyrin-IX biosynthesis; coproporphyrinogen-III from 5-aminolevulinate: step 4/4. In terms of biological role, catalyzes the decarboxylation of four acetate groups of uroporphyrinogen-III to yield coproporphyrinogen-III. The protein is Uroporphyrinogen decarboxylase of Shigella dysenteriae serotype 1 (strain Sd197).